A 1584-amino-acid polypeptide reads, in one-letter code: Sterile alpha motif domain-containing protein 9-like (1584 aa).

One can recognise an SAM domain in the interval 14–79 (WTKEHVKKWV…RSYNKLNSKS (66 aa)). The segment at 76–122 (NSKSPESDNHDPGQLDNSKPSKTEHQKNPKHTKKEEENSMSSNIDYD) is disordered. The span at 80 to 112 (PESDNHDPGQLDNSKPSKTEHQKNPKHTKKEEE) shows a compositional bias: basic and acidic residues.

As to quaternary structure, interacts with EEA1. In terms of tissue distribution, widely expressed in adult and fetal tissues. Expressed in the cerebellum. Variable expression in tumors. Down-regulated in breast cancer.

It localises to the early endosome. The protein resides in the mitochondrion. Its function is as follows. May be involved in endosome fusion. Mediates down-regulation of growth factor signaling via internalization of growth factor receptors. The protein is Sterile alpha motif domain-containing protein 9-like (SAMD9L) of Homo sapiens (Human).